We begin with the raw amino-acid sequence, 487 residues long: WD repeat, SAM and U-box domain-containing protein 1 (487 aa).

WD repeat units lie at residues 10 to 47 (SHRDDVNCVAFSGDLLATCSADKSICVYSSRDFSELPF), 52 to 93 (GHGY…AVLE), 95 to 134 (PGRSPVRVCAFSPDSSHLVSGGSDGSIALWDFTSRTLRRT), 137 to 176 (VNDTSIVACSFTPCGQMFITGSTYGDLRLWDLNMNHLHAE), 179 to 227 (AHDL…SAGI), 237 to 276 (GQSAPVLSCAYSPDGQMLVSGSVDKTVTVYQADEGVLLYT), and 279 to 318 (QHDRYVTACAFSPTAPLIATGSMDKSVNIWRMEEGSSAQG). The 65-residue stretch at 347 to 411 (WSEEEVLAWL…MKKIEELKMV (65 aa)) folds into the SAM domain. Positions 416–487 (GTPDEFLCPI…MAIFRWSTSQ (72 aa)) constitute a U-box domain.

This Danio rerio (Zebrafish) protein is WD repeat, SAM and U-box domain-containing protein 1 (wdsub1).